Consider the following 333-residue polypeptide: Fructose-1,6-bisphosphatase class 1 1 (333 aa).

Positions 81, 100, 102, and 103 each coordinate Mg(2+). Substrate-binding positions include 103–106 and Asn191; that span reads DGSS. Glu263 lines the Mg(2+) pocket.

This sequence belongs to the FBPase class 1 family. In terms of assembly, homotetramer. Mg(2+) is required as a cofactor.

It localises to the cytoplasm. It carries out the reaction beta-D-fructose 1,6-bisphosphate + H2O = beta-D-fructose 6-phosphate + phosphate. Its pathway is carbohydrate biosynthesis; Calvin cycle. In Cereibacter sphaeroides (strain ATCC 17029 / ATH 2.4.9) (Rhodobacter sphaeroides), this protein is Fructose-1,6-bisphosphatase class 1 1.